A 150-amino-acid chain; its full sequence is CASP-like protein 2 (150 aa).

Over Met-1–Thr-17 the chain is Cytoplasmic. The helical transmembrane segment at Phe-18–Met-38 threads the bilayer. Residues Gly-39 to Thr-41 lie on the Extracellular side of the membrane. Residues Phe-42–Ile-62 form a helical membrane-spanning segment. Over Phe-63–Asp-82 the chain is Cytoplasmic. Residues Met-83 to His-103 form a helical membrane-spanning segment. The Extracellular segment spans residues Lys-104–Ser-121. Residues Leu-122–Tyr-142 traverse the membrane as a helical segment. The Cytoplasmic portion of the chain corresponds to Lys-143–Phe-150.

This sequence belongs to the Casparian strip membrane proteins (CASP) family. Homodimer and heterodimers.

The protein resides in the cell membrane. This chain is CASP-like protein 2, found in Picea sitchensis (Sitka spruce).